Consider the following 610-residue polypeptide: MSEIFDAKAFLKTVTSQPGVYRMYDAGGTVIYVGKAKDLKKRLSSYFRSNLASRKTEALVAQIQHIDVTVTHTETEALLLEHNYIKLYQPRYNVLLRDDKSYPFIFLSGDTHPRLAMHRGAKHAKGEYFGPFPNGYAVRETLALLQKIFPIRQCENSVYRNRSRPCLQYQIGRCLGPCVAGLVSEEEYTQQVEYVRLFLSGKDDQVLTQLIARMEKASQDLAFEEAARIRDQIQAVRRVTEKQFVSNAGDDLDVIGVAFDAGMACVHVLFIRQGKVLGSRSYFPKVPGGTELGEVVETFVGQFYLQGSQMRTLPGEILLDFNLSDKTLLADSLSELAGRRIHVQTKPRGDRARYLKLARTNAATALVTKLSQQSTITQRLTALATVLKLPAIKRMECFDISHTMGEQTVASCVVFDANGPLRAEYRRYNIAGITPGDDYAAMNQVLRRRYGKAIEESKIPDVILIDGGKGQLAQAKAVFAELDVPWDKHRPLLLGVAKGADRKAGLETLFFEPEGEGFSLPPDSPALHVIQHIRDESHDHAIGGHRKKRAKVKNTSTLETIEGVGPKRRQMLLKYMGGLQGLRNASVEEIAKVPGISQGLAEKIFWSLKH.

Residues 16 to 94 (SQPGVYRMYD…IKLYQPRYNV (79 aa)) form the GIY-YIG domain. Residues 204-239 (DQVLTQLIARMEKASQDLAFEEAARIRDQIQAVRRV) form the UVR domain.

This sequence belongs to the UvrC family. In terms of assembly, interacts with UvrB in an incision complex.

It localises to the cytoplasm. In terms of biological role, the UvrABC repair system catalyzes the recognition and processing of DNA lesions. UvrC both incises the 5' and 3' sides of the lesion. The N-terminal half is responsible for the 3' incision and the C-terminal half is responsible for the 5' incision. This Salmonella typhi protein is UvrABC system protein C.